The primary structure comprises 340 residues: Erlin-2 (340 aa).

Topologically, residues Met1–Gln3 are cytoplasmic. A helical transmembrane segment spans residues Leu4–His24. The Lumenal portion of the chain corresponds to Lys25–Asn340. A glycan (N-linked (GlcNAc...) asparagine) is linked at Asn106. Residues Glu177–Ala309 form an interaction with ERLIN1 region. N6-acetyllysine is present on Lys267.

This sequence belongs to the band 7/mec-2 family. Forms a heteromeric complex with ERLIN1. In complex with ERLIN1, interacts with RNF170. Interacts with activated ITPR1, independently of the degree of ITPR1 polyubiquitination. Interacts with SCAP, INSIG1, SREBF1 and SREBF2 under cholesterol sufficiency conditions; indicative for an association with the SCAP-SREBP-INSIG complex. Probably part of an AMFR/gp78 and INSIG1-containing ubiquitin ligase complex involved in ERAD of HMGCR. Interacts with TMUB1; TMUB1 bridges the association with AMFR. Interacts with SYVN1 and RNF139. Interacts with TMEM259. Interacts with TMEM41B. Post-translationally, deubiquitinated by USP25; leading to stabilization.

It is found in the endoplasmic reticulum membrane. Its function is as follows. Component of the ERLIN1/ERLIN2 complex which mediates the endoplasmic reticulum-associated degradation (ERAD) of inositol 1,4,5-trisphosphate receptors (IP3Rs) such as ITPR1. Promotes sterol-accelerated ERAD of HMGCR probably implicating an AMFR/gp78-containing ubiquitin ligase complex. Involved in regulation of cellular cholesterol homeostasis by regulation the SREBP signaling pathway. May promote ER retention of the SCAP-SREBF complex. The chain is Erlin-2 (Erlin2) from Mus musculus (Mouse).